We begin with the raw amino-acid sequence, 173 residues long: Ribosome maturation factor RimM (173 aa).

The region spanning 90–169 (EDEYFWFDIL…RIDTKGAQDI (80 aa)) is the PRC barrel domain.

The protein belongs to the RimM family. Binds ribosomal protein uS19.

It is found in the cytoplasm. Its function is as follows. An accessory protein needed during the final step in the assembly of 30S ribosomal subunit, possibly for assembly of the head region. Essential for efficient processing of 16S rRNA. May be needed both before and after RbfA during the maturation of 16S rRNA. It has affinity for free ribosomal 30S subunits but not for 70S ribosomes. This chain is Ribosome maturation factor RimM, found in Nitratiruptor sp. (strain SB155-2).